The chain runs to 268 residues: Putative esterase/lipase 2 (268 aa).

Residue H28 is part of the active site. H96 functions as the Charge relay system in the catalytic mechanism.

It belongs to the lipase/esterase LIP3/BchO family.

The sequence is that of Putative esterase/lipase 2 from Mycoplasma pneumoniae (strain ATCC 29342 / M129 / Subtype 1) (Mycoplasmoides pneumoniae).